A 139-amino-acid chain; its full sequence is Ribosome-binding factor A (139 aa).

Residues 120 to 139 (PENLLAVEDNTDEDDESFSE) are disordered. Residues 128 to 139 (DNTDEDDESFSE) show a composition bias toward acidic residues.

The protein belongs to the RbfA family. Monomer. Binds 30S ribosomal subunits, but not 50S ribosomal subunits or 70S ribosomes.

Its subcellular location is the cytoplasm. One of several proteins that assist in the late maturation steps of the functional core of the 30S ribosomal subunit. Associates with free 30S ribosomal subunits (but not with 30S subunits that are part of 70S ribosomes or polysomes). Required for efficient processing of 16S rRNA. May interact with the 5'-terminal helix region of 16S rRNA. The chain is Ribosome-binding factor A from Nostoc punctiforme (strain ATCC 29133 / PCC 73102).